We begin with the raw amino-acid sequence, 367 residues long: Prenyltransferase idtC (367 aa).

The first 22 residues, 1–22 (MTTLAWFAGRSMVLDLAALTSA), serve as a signal peptide directing secretion. The span at 32–42 (TSTPTSTPTST) shows a compositional bias: low complexity. The disordered stretch occupies residues 32-84 (TSTPTSTPTSTDKAGTPPGSTIHHYGYPQGSVTKPNNSKTEKENGSPKDSKGN). Residue asparagine 67 is glycosylated (N-linked (GlcNAc...) asparagine). Positions 70–82 (KTEKENGSPKDSK) are enriched in basic and acidic residues. Histidine 132 is a binding site for substrate. Mg(2+)-binding residues include aspartate 139 and aspartate 143. Substrate is bound at residue arginine 148. N-linked (GlcNAc...) asparagine glycosylation occurs at asparagine 150. Substrate is bound by residues lysine 233, threonine 234, glutamine 264, asparagine 271, and lysine 281.

Belongs to the FPP/GGPP synthase family. Requires Mg(2+) as cofactor.

Its pathway is secondary metabolite biosynthesis. In terms of biological role, prenyltransferase; part of the gene cluster that mediates the biosynthesis of paspalitrems, indole-diterpene (IDT) mycotoxins that are potent tremorgens in mammals. The geranylgeranyl diphosphate (GGPP) synthase idtG is proposed to catalyze the first step in IDT biosynthesis via catalysis of a series of iterative condensations of isopentenyl diphosphate (IPP) with dimethylallyl diphosphate (DMAPP), geranyl diphosphate (GPP), and farnesyl diphosphate (FPP), to form GGPP. Condensation of indole-3-glycerol phosphate with GGPP by the prenyltransferase idtC then forms 3-geranylgeranylindole (3-GGI). Epoxidation of the two terminal alkenes of the geranylgeranyl moiety by the FAD-dependent monooxygenase idtM, and cyclization by the terpene cyclase idtB then leads to the production of paspaline. The cytochrome P450 monooxygenase idtP then catalyzes oxidative elimination of the pendant methyl group at C-12 of paspaline and generates the C-10 ketone to yield 13-desoxypaxilline. The cytochrome P450 monooxygenase idtQ may catalyze the C-13 oxidation of 13-desoxypaxilline to afford paxilline. Considering that both paspalicine and paxilline were detected in C.paspali, idtQ also catalyzes the formation of paspalinine from 13-desoxypaxilline via paspalicine as an intermediate. Finally, the alpha-prenyltransferase idtF prenylates paspalinine at the C-20 or the C-21 positions to yield paspalitrems A and C, respectively. The hydroxylation of paspalitrem A at C-32 by a still unknown oxidase affords paspalitrem B. The polypeptide is Prenyltransferase idtC (Claviceps paspali (Rye ergot fungus)).